We begin with the raw amino-acid sequence, 102 residues long: Small ribosomal subunit protein bS20 (102 aa).

The protein belongs to the bacterial ribosomal protein bS20 family.

In terms of biological role, binds directly to 16S ribosomal RNA. The polypeptide is Small ribosomal subunit protein bS20 (Synechococcus sp. (strain WH7803)).